A 475-amino-acid chain; its full sequence is Pyruvate kinase (475 aa).

R33 contributes to the substrate binding site. Residues N35, S37, and D67 each coordinate K(+). Residue 35–38 participates in ATP binding; the sequence is NFSH. ATP contacts are provided by R74 and K155. Position 220 (E220) interacts with Mg(2+). Substrate is bound by residues G243, D244, and T276. D244 contacts Mg(2+).

Belongs to the pyruvate kinase family. In terms of assembly, homotetramer. Mg(2+) is required as a cofactor. Requires K(+) as cofactor.

It carries out the reaction pyruvate + ATP = phosphoenolpyruvate + ADP + H(+). It functions in the pathway carbohydrate degradation; glycolysis; pyruvate from D-glyceraldehyde 3-phosphate: step 5/5. The chain is Pyruvate kinase (pyk) from Corynebacterium glutamicum (strain ATCC 13032 / DSM 20300 / JCM 1318 / BCRC 11384 / CCUG 27702 / LMG 3730 / NBRC 12168 / NCIMB 10025 / NRRL B-2784 / 534).